The following is a 144-amino-acid chain: Large ribosomal subunit protein uL15 (144 aa).

Residues 1-54 (MRLNTLSPAAGSKHAPKRVGRGMGSGLGKTAGRGHKGQKSRSGGGVRPGFEGGQ) form a disordered region. Gly residues-rich tracts occupy residues 21–31 (RGMGSGLGKTA) and 42–52 (SGGGVRPGFEG).

This sequence belongs to the universal ribosomal protein uL15 family. Part of the 50S ribosomal subunit.

Binds to the 23S rRNA. In Shewanella baltica (strain OS223), this protein is Large ribosomal subunit protein uL15.